Consider the following 280-residue polypeptide: Lipase chaperone (280 aa).

A helical transmembrane segment spans residues 5 to 22 (ALTIITIASGSLGAVYFL).

This sequence belongs to the lipase chaperone family.

It is found in the cell inner membrane. Functionally, may be involved in the folding of the extracellular lipase during its passage through the periplasm. This is Lipase chaperone (lifO) from Vibrio vulnificus (strain YJ016).